Consider the following 159-residue polypeptide: Probable deoxyuridine 5'-triphosphate nucleotidohydrolase (159 aa).

This sequence belongs to the dCTP deaminase family. Archaeal dUTPase subfamily.

The enzyme catalyses dUTP + H2O = dUMP + diphosphate + H(+). It participates in pyrimidine metabolism; dUMP biosynthesis; dUMP from dCTP (dUTP route): step 2/2. This enzyme is involved in nucleotide metabolism: it produces dUMP, the immediate precursor of thymidine nucleotides and it decreases the intracellular concentration of dUTP so that uracil cannot be incorporated into DNA. The protein is Probable deoxyuridine 5'-triphosphate nucleotidohydrolase of Aeropyrum pernix (strain ATCC 700893 / DSM 11879 / JCM 9820 / NBRC 100138 / K1).